The sequence spans 142 residues: Large ribosomal subunit protein uL13 (142 aa).

It belongs to the universal ribosomal protein uL13 family. In terms of assembly, part of the 50S ribosomal subunit.

Functionally, this protein is one of the early assembly proteins of the 50S ribosomal subunit, although it is not seen to bind rRNA by itself. It is important during the early stages of 50S assembly. The chain is Large ribosomal subunit protein uL13 from Klebsiella pneumoniae (strain 342).